The following is a 475-amino-acid chain: ATP-dependent protease ATPase subunit HslU1 (475 aa).

A mitochondrion-targeting transit peptide spans 1–27 (MMRRVTSSLPSALKLGRSLGPNVRFSG). ATP contacts are provided by residues Ile66, 108–113 (GVGKTE), Asp286, Glu353, and Arg425.

The protein belongs to the ClpX chaperone family. HslU subfamily. As to quaternary structure, a double ring-shaped homohexamer of HslV is capped on each side by a ring-shaped HslU homohexamer. The assembly of the HslU/HslV complex (HslVU) is dependent on binding of ATP.

The protein localises to the mitochondrion matrix. The protein resides in the kinetoplast. ATPase subunit of a proteasome-like degradation complex; this subunit has chaperone activity. The binding of ATP and its subsequent hydrolysis by HslU are essential for unfolding of protein substrates subsequently hydrolyzed by HslV. HslU recognizes the N-terminal part of its protein substrates and unfolds these before they are guided to HslV for hydrolysis. The HslVU protease complex functions in mitochondrial DNA replication by regulating DNA helicase PIF2 protein levels. This chain is ATP-dependent protease ATPase subunit HslU1 (HslU1), found in Trypanosoma brucei brucei (strain 927/4 GUTat10.1).